A 496-amino-acid polypeptide reads, in one-letter code: MSTAQHTSPRTYEVRTYGCQMNVHDSERLTGLLEDAGYVAAPDGQQADVVVFNTCAVRENADNKLYGNLGHLAPVKAATPGMQIAVGGCLAQKDRDTITTRAPWVDVVFGTHNIGSLPALLERARVQDEAQVEILESLEVFPSTLPTRRESAYAAWVSVSVGCNNTCTFCIVPSLRGKEKDRRPGEILAEVEALVADGVSEITLLGQNVNAYGVEFGDRQAFSKLLRACGEVDGLERVRFTSPHPAEFTDDVIAAMAETPNVMPQLHMPLQSGSDKVLRDMRRSYRQRKFLGILERVRAAMPDAAITTDIIVGFPGETEEDFLQTMHVVRAARFSGAFTFQYSKRPGTPAATLPDQVPPEVVKDRYERLVALVNEIAWEENKRLVGRRVELMVAEGEGRKDAATHRLSGRGPDNRLVHFAPPAGVEIRPGDLATVEVTYAAPHHLVADGPVVDVRRTRSGDAWAARNAAPAPSSGVTLGMPTVGAPAPLPDAPACR.

The MTTase N-terminal domain maps to 10 to 126 (RTYEVRTYGC…LPALLERARV (117 aa)). Residues Cys-19, Cys-55, Cys-89, Cys-163, Cys-167, and Cys-170 each coordinate [4Fe-4S] cluster. In terms of domain architecture, Radical SAM core spans 149–380 (RESAYAAWVS…ALVNEIAWEE (232 aa)). One can recognise a TRAM domain in the interval 382–451 (KRLVGRRVEL…PHHLVADGPV (70 aa)). The interval 465-496 (ARNAAPAPSSGVTLGMPTVGAPAPLPDAPACR) is disordered. The segment covering 487–496 (APLPDAPACR) has biased composition (pro residues).

Belongs to the methylthiotransferase family. MiaB subfamily. In terms of assembly, monomer. Requires [4Fe-4S] cluster as cofactor.

The protein localises to the cytoplasm. The enzyme catalyses N(6)-dimethylallyladenosine(37) in tRNA + (sulfur carrier)-SH + AH2 + 2 S-adenosyl-L-methionine = 2-methylsulfanyl-N(6)-dimethylallyladenosine(37) in tRNA + (sulfur carrier)-H + 5'-deoxyadenosine + L-methionine + A + S-adenosyl-L-homocysteine + 2 H(+). Functionally, catalyzes the methylthiolation of N6-(dimethylallyl)adenosine (i(6)A), leading to the formation of 2-methylthio-N6-(dimethylallyl)adenosine (ms(2)i(6)A) at position 37 in tRNAs that read codons beginning with uridine. In Nocardioides sp. (strain ATCC BAA-499 / JS614), this protein is tRNA-2-methylthio-N(6)-dimethylallyladenosine synthase.